The primary structure comprises 676 residues: RNA helicase NPH-II (676 aa).

In terms of domain architecture, Helicase ATP-binding spans 172–347 (FSAWISHRPV…VFLPNPAFIH (176 aa)). ATP is bound at residue 185–192 (GGTGVGKT). The short motif at 296–299 (DEVH) is the DEXH box element. The Helicase C-terminal domain occupies 366–535 (NPSSRMAYIE…NYILYANKFN (170 aa)).

It belongs to the DEAD box helicase family. DEAH subfamily. As to quaternary structure, monomer.

The protein localises to the virion. It carries out the reaction ATP + H2O = ADP + phosphate + H(+). Its function is as follows. NTP-dependent helicase that catalyzes unidirectional unwinding of 3'tailed duplex RNAs and plays an important role during transcription of early mRNAs, presumably by preventing R-loop formation behind the elongating RNA polymerase. Might also play a role in the export of newly synthesized mRNA chains out of the core into the cytoplasm. Required for replication and propagation of viral particles. The sequence is that of RNA helicase NPH-II (OPG084) from Vaccinia virus (strain Ankara) (VACV).